Reading from the N-terminus, the 458-residue chain is Argininosuccinate lyase (458 aa).

Belongs to the lyase 1 family. Argininosuccinate lyase subfamily.

It localises to the cytoplasm. The catalysed reaction is 2-(N(omega)-L-arginino)succinate = fumarate + L-arginine. Its pathway is amino-acid biosynthesis; L-arginine biosynthesis; L-arginine from L-ornithine and carbamoyl phosphate: step 3/3. The sequence is that of Argininosuccinate lyase from Actinobacillus pleuropneumoniae serotype 7 (strain AP76).